The sequence spans 191 residues: Ion-translocating oxidoreductase complex subunit B (191 aa).

Residues 1 to 26 form a hydrophobic region; sequence MSAIWIAIAVLSALSLVFGGLLGYAS. In terms of domain architecture, 4Fe-4S spans 32 to 91; sequence EEDPIVEQIDAILPQSQCGQCGYPGCRPYADAVGNNGEMINKCAPGGEQTMLKLAALLNV. Cysteine 49, cysteine 52, cysteine 57, cysteine 74, cysteine 116, cysteine 119, cysteine 122, cysteine 126, cysteine 146, cysteine 149, cysteine 152, and cysteine 156 together coordinate [4Fe-4S] cluster. 2 4Fe-4S ferredoxin-type domains span residues 107–136 and 137–166; these read KVAWIDEANCIGCTKCIQACPVDAIVGATR and AMHTVLSDICTGCDLCVAPCPTDCIEMRPV.

This sequence belongs to the 4Fe4S bacterial-type ferredoxin family. RnfB subfamily. As to quaternary structure, the complex is composed of six subunits: RnfA, RnfB, RnfC, RnfD, RnfE and RnfG. [4Fe-4S] cluster serves as cofactor.

Its subcellular location is the cell inner membrane. In terms of biological role, part of a membrane-bound complex that couples electron transfer with translocation of ions across the membrane. This chain is Ion-translocating oxidoreductase complex subunit B, found in Erwinia tasmaniensis (strain DSM 17950 / CFBP 7177 / CIP 109463 / NCPPB 4357 / Et1/99).